A 262-amino-acid chain; its full sequence is Tryptophan synthase alpha chain (262 aa).

Catalysis depends on proton acceptor residues Glu-52 and Asp-63.

It belongs to the TrpA family. As to quaternary structure, tetramer of two alpha and two beta chains.

It catalyses the reaction (1S,2R)-1-C-(indol-3-yl)glycerol 3-phosphate + L-serine = D-glyceraldehyde 3-phosphate + L-tryptophan + H2O. The protein operates within amino-acid biosynthesis; L-tryptophan biosynthesis; L-tryptophan from chorismate: step 5/5. In terms of biological role, the alpha subunit is responsible for the aldol cleavage of indoleglycerol phosphate to indole and glyceraldehyde 3-phosphate. The polypeptide is Tryptophan synthase alpha chain (Mycobacteroides abscessus (strain ATCC 19977 / DSM 44196 / CCUG 20993 / CIP 104536 / JCM 13569 / NCTC 13031 / TMC 1543 / L948) (Mycobacterium abscessus)).